Reading from the N-terminus, the 237-residue chain is 1-(5-phosphoribosyl)-5-[(5-phosphoribosylamino)methylideneamino] imidazole-4-carboxamide isomerase (237 aa).

Aspartate 8 serves as the catalytic Proton acceptor. Residue aspartate 127 is the Proton donor of the active site.

This sequence belongs to the HisA/HisF family.

Its subcellular location is the cytoplasm. The catalysed reaction is 1-(5-phospho-beta-D-ribosyl)-5-[(5-phospho-beta-D-ribosylamino)methylideneamino]imidazole-4-carboxamide = 5-[(5-phospho-1-deoxy-D-ribulos-1-ylimino)methylamino]-1-(5-phospho-beta-D-ribosyl)imidazole-4-carboxamide. Its pathway is amino-acid biosynthesis; L-histidine biosynthesis; L-histidine from 5-phospho-alpha-D-ribose 1-diphosphate: step 4/9. The chain is 1-(5-phosphoribosyl)-5-[(5-phosphoribosylamino)methylideneamino] imidazole-4-carboxamide isomerase from Sulfurovum sp. (strain NBC37-1).